Consider the following 50-residue polypeptide: Inter-alpha-trypsin inhibitor heavy chain H2 (50 aa).

Belongs to the ITIH family. I-alpha-I plasma protease inhibitors are assembled from one or two heavy chains (HC) and one light chain, bikunin. Inter-alpha-inhibitor (I-alpha-I) is composed of ITIH1/HC1, ITIH2/HC2 and bikunin. Post-translationally, phosphorylated by FAM20C in the extracellular medium.

The protein resides in the secreted. Its function is as follows. May act as a carrier of hyaluronan in serum or as a binding protein between hyaluronan and other matrix protein, including those on cell surfaces in tissues to regulate the localization, synthesis and degradation of hyaluronan which are essential to cells undergoing biological processes. In Bos taurus (Bovine), this protein is Inter-alpha-trypsin inhibitor heavy chain H2 (ITIH2).